The sequence spans 148 residues: Large ribosomal subunit protein bL9 (148 aa).

The protein belongs to the bacterial ribosomal protein bL9 family.

Binds to the 23S rRNA. This is Large ribosomal subunit protein bL9 from Salinispora tropica (strain ATCC BAA-916 / DSM 44818 / JCM 13857 / NBRC 105044 / CNB-440).